We begin with the raw amino-acid sequence, 671 residues long: Alpha-1,4-glucan:maltose-1-phosphate maltosyltransferase (671 aa).

Alpha-maltose 1-phosphate contacts are provided by K252, Q312, and D347. Catalysis depends on D382, which acts as the Nucleophile. Position 383 (N383) interacts with alpha-maltose 1-phosphate. The Proton donor role is filled by E411. K521 to Y522 contacts alpha-maltose 1-phosphate.

It belongs to the glycosyl hydrolase 13 family. GlgE subfamily. As to quaternary structure, homodimer.

It catalyses the reaction alpha-maltose 1-phosphate + [(1-&gt;4)-alpha-D-glucosyl](n) = [(1-&gt;4)-alpha-D-glucosyl](n+2) + phosphate. Functionally, maltosyltransferase that uses maltose 1-phosphate (M1P) as the sugar donor to elongate linear or branched alpha-(1-&gt;4)-glucans. Is involved in a branched alpha-glucan biosynthetic pathway from trehalose, together with TreS, Mak and GlgB. This chain is Alpha-1,4-glucan:maltose-1-phosphate maltosyltransferase, found in Corynebacterium pseudotuberculosis (strain 1002).